A 349-amino-acid chain; its full sequence is Peroxidase 7 (349 aa).

The N-terminal stretch at M1–A22 is a signal peptide. Cystine bridges form between C60/C136, C93/C98, C142/C341, and C220/C252. The active-site Proton acceptor is the H91. Residues D92, V95, G97, D99, and S101 each contribute to the Ca(2+) site. P183 is a binding site for substrate. H213 is a binding site for heme b. T214 is a binding site for Ca(2+). A glycan (N-linked (GlcNAc...) asparagine) is linked at N231. Ca(2+) contacts are provided by D262, T265, and D270.

It belongs to the peroxidase family. Classical plant (class III) peroxidase subfamily. Requires heme b as cofactor. The cofactor is Ca(2+).

It is found in the secreted. It catalyses the reaction 2 a phenolic donor + H2O2 = 2 a phenolic radical donor + 2 H2O. In terms of biological role, removal of H(2)O(2), oxidation of toxic reductants, biosynthesis and degradation of lignin, suberization, auxin catabolism, response to environmental stresses such as wounding, pathogen attack and oxidative stress. These functions might be dependent on each isozyme/isoform in each plant tissue. In Arabidopsis thaliana (Mouse-ear cress), this protein is Peroxidase 7 (PER7).